A 399-amino-acid polypeptide reads, in one-letter code: Elongation factor Tu (399 aa).

One can recognise a tr-type G domain in the interval 10–209 (KPHVNIGTIG…EVDAYIPTPE (200 aa)). Positions 19-26 (GHVDHGKT) are G1. GTP is bound at residue 19-26 (GHVDHGKT). T26 is a Mg(2+) binding site. The tract at residues 60–64 (GITIA) is G2. The segment at 81–84 (DCPG) is G3. GTP-binding positions include 81-85 (DCPGH) and 136-139 (NKQD). Positions 136–139 (NKQD) are G4. The segment at 174-176 (SAL) is G5.

Belongs to the TRAFAC class translation factor GTPase superfamily. Classic translation factor GTPase family. EF-Tu/EF-1A subfamily. As to quaternary structure, monomer.

The protein localises to the cytoplasm. The catalysed reaction is GTP + H2O = GDP + phosphate + H(+). Its function is as follows. GTP hydrolase that promotes the GTP-dependent binding of aminoacyl-tRNA to the A-site of ribosomes during protein biosynthesis. The chain is Elongation factor Tu from Helicobacter pylori (strain G27).